Reading from the N-terminus, the 105-residue chain is Malonate decarboxylase acyl carrier protein (105 aa).

Residue S28 is modified to O-(phosphoribosyl dephospho-coenzyme A)serine.

This sequence belongs to the MdcC family. Post-translationally, covalently binds the prosthetic group of malonate decarboxylase.

Its subcellular location is the cytoplasm. Its function is as follows. Subunit of malonate decarboxylase, it is an acyl carrier protein to which acetyl and malonyl thioester residues are bound via a 2'-(5''-phosphoribosyl)-3'-dephospho-CoA prosthetic group and turn over during the catalytic mechanism. In Bradyrhizobium diazoefficiens (strain JCM 10833 / BCRC 13528 / IAM 13628 / NBRC 14792 / USDA 110), this protein is Malonate decarboxylase acyl carrier protein.